We begin with the raw amino-acid sequence, 790 residues long: Ribonucleoside-diphosphate reductase large subunit (790 aa).

Substrate-binding positions include threonine 208, 223–224, glycine 254, 436–440, and 621–625; these read SC, NLCTE, and PTVSS. Cysteine 224 and cysteine 453 are disulfide-bonded. Residue asparagine 436 is the Proton acceptor of the active site. The Cysteine radical intermediate role is filled by cysteine 438. Glutamate 440 functions as the Proton acceptor in the catalytic mechanism.

The protein belongs to the ribonucleoside diphosphate reductase large chain family. In terms of assembly, heterotetramer composed of a homodimer of the large subunit (R1) and a homodimer of the small subunit (R2). Larger multisubunit protein complex are also active, composed of (R1)n(R2)n.

It catalyses the reaction a 2'-deoxyribonucleoside 5'-diphosphate + [thioredoxin]-disulfide + H2O = a ribonucleoside 5'-diphosphate + [thioredoxin]-dithiol. In terms of biological role, ribonucleoside-diphosphate reductase holoenzyme provides the precursors necessary for viral DNA synthesis. Allows virus growth in non-dividing cells, as well as reactivation from latency in infected hosts. Catalyzes the biosynthesis of deoxyribonucleotides from the corresponding ribonucleotides. This is Ribonucleoside-diphosphate reductase large subunit from Equus caballus (Horse).